The chain runs to 155 residues: Cyanate hydratase (155 aa).

Catalysis depends on residues Arg95, Glu98, and Ser121.

It belongs to the cyanase family.

The catalysed reaction is cyanate + hydrogencarbonate + 3 H(+) = NH4(+) + 2 CO2. Catalyzes the reaction of cyanate with bicarbonate to produce ammonia and carbon dioxide. In Pseudomonas savastanoi pv. phaseolicola (strain 1448A / Race 6) (Pseudomonas syringae pv. phaseolicola (strain 1448A / Race 6)), this protein is Cyanate hydratase.